The chain runs to 302 residues: MTVKIYDTPEVQDFLKIVAGLDQEGGNDRGKQIIHRILSDLYRTIDDFDITAEQYWSAVSLLNALGQASQFGLLSPGLGFDHYMDMRMDAADAEAKRTGGTPRTIEGPLYVAGAPEAEGFARMDDDPDTDGETMWLHGQVRDTAGKPIPGAKVEIWHCNSKGGYSFFDKSQTPYNLRRTIIADNEGYYRARSVIPSGYGVPEGAPTDQVLKLLGRHGERPAHIHYFISAPGHQHLTTQINLAGDPYTYDDFAFATRQDLAAEGKRVENHPAAQQYGVEGTVTEVIFNIELSPTAEEELQARP.

Fe cation-binding residues include Y164, Y198, H222, and H224.

The protein belongs to the intradiol ring-cleavage dioxygenase family. It depends on Fe(3+) as a cofactor.

The enzyme catalyses catechol + O2 = cis,cis-muconate + 2 H(+). It participates in aromatic compound metabolism; beta-ketoadipate pathway; 5-oxo-4,5-dihydro-2-furylacetate from catechol: step 1/3. This chain is Catechol 1,2-dioxygenase (pheB), found in Pseudomonas sp. (strain EST1001).